The sequence spans 603 residues: Golgin subfamily A member 8B (603 aa).

Disordered stretches follow at residues 1 to 82 (MAEE…NSRS), 95 to 125 (LKQQ…ELEG), 398 to 419 (TSAE…ESSG), and 460 to 492 (PGDS…GAAG). The span at 46–66 (AASGGCHSSEASSSASSSLHA) shows a compositional bias: low complexity. Residues 69–82 (SPCQEQAAVLNSRS) show a composition bias toward polar residues. Coiled coils occupy residues 82-173 (SIKI…GELE) and 212-440 (LKGH…LELG). Residues 100–124 (KQVEHQLEEEKKANNEKQKAERELE) are compositionally biased toward basic and acidic residues. Residues 469–482 (PGGGHHQAGPGQGG) are compositionally biased toward gly residues. Residues 491 to 603 (AGDGVAACGS…CWAWLPRRRR (113 aa)) form a golgi-targeting domain region.

Belongs to the GOLGA8 family. Highly expressed in brain, heart and kidney. Detected at lower levels in liver, thymus, spleen, lung and peripheral blood leukocytes.

It is found in the golgi apparatus. It localises to the golgi stack membrane. In terms of biological role, may be involved in maintaining Golgi structure. The protein is Golgin subfamily A member 8B (GOLGA8B) of Homo sapiens (Human).